The sequence spans 39 residues: Cytochrome b6-f complex subunit 5 (39 aa).

Residues 5–25 (LLCGIVLGLVPITLLGLFVSA) traverse the membrane as a helical segment.

This sequence belongs to the PetG family. As to quaternary structure, the 4 large subunits of the cytochrome b6-f complex are cytochrome b6, subunit IV (17 kDa polypeptide, PetD), cytochrome f and the Rieske protein, while the 4 small subunits are PetG, PetL, PetM and PetN. The complex functions as a dimer.

It localises to the cellular thylakoid membrane. In terms of biological role, component of the cytochrome b6-f complex, which mediates electron transfer between photosystem II (PSII) and photosystem I (PSI), cyclic electron flow around PSI, and state transitions. PetG is required for either the stability or assembly of the cytochrome b6-f complex. This is Cytochrome b6-f complex subunit 5 from Prochlorococcus marinus subsp. pastoris (strain CCMP1986 / NIES-2087 / MED4).